The sequence spans 168 residues: Desumoylating isopeptidase 1 (168 aa).

The 143-residue stretch at 7 to 149 folds into the PPPDE domain; that stretch reads YPVKLYVYDL…FGQALRPLLD (143 aa). The active site involves H38. A Nuclear export signal 1 motif is present at residues 83 to 91; the sequence is IFLEYLSSL. The active site involves C108. The Nuclear export signal 2 signature appears at 139 to 153; it reads PFGQALRPLLDSIQI.

This sequence belongs to the DeSI family. Homodimer. Interacts with UBQLN4; leading to the export of UBQLN4 from the nucleus.

The protein resides in the cytoplasm. Its subcellular location is the nucleus. The enzyme catalyses S-hexadecanoyl-L-cysteinyl-[protein] + H2O = L-cysteinyl-[protein] + hexadecanoate + H(+). Palmostatin B inhibits its palmitoyl protein thioesterase activity. In terms of biological role, protease which deconjugates SUMO1, SUMO2 and SUMO3 from some substrate proteins. Has isopeptidase but not SUMO-processing activity. Desumoylates ZBTB46. Collaborates with UBQLN4 in the export of ubiquitinated proteins from the nucleus to the cytoplasm. Exhibits palmitoyl protein thioesterase (S-depalmitoylation) activity towards synthetic substrates 4-methylumbelliferyl-6-S-palmitoyl-beta-D-glucopyranoside and S-depalmitoylation probe 5 (DPP-5). The protein is Desumoylating isopeptidase 1 of Homo sapiens (Human).